The sequence spans 348 residues: Centromere protein N (348 aa).

This sequence belongs to the CENP-N/CHL4 family.

Its subcellular location is the nucleus. It is found in the chromosome. The protein localises to the centromere. Its function is as follows. Probable component of a centromeric complex involved in assembly of kinetochore proteins, mitotic progression and chromosome segregation. This chain is Centromere protein N (cenpn), found in Xenopus tropicalis (Western clawed frog).